The chain runs to 87 residues: Large ribosomal subunit protein bL31B (87 aa).

Belongs to the bacterial ribosomal protein bL31 family. Type B subfamily. In terms of assembly, part of the 50S ribosomal subunit.

This Staphylococcus carnosus (strain TM300) protein is Large ribosomal subunit protein bL31B.